The primary structure comprises 634 residues: Sodium-dependent neutral amino acid transporter B(0)AT1 (634 aa).

Over 1 to 41 (MVRLVLPNPGLDARIPSLAELETIEQEEASSRPKWDNKAQY) the chain is Cytoplasmic. Serine 17 is modified (phosphoserine). The helical transmembrane segment at 42–62 (MLTCLGFCVGLGNVWRFPYLC) threads the bilayer. Over 63–67 (QSHGG) the chain is Extracellular. Residues 68–88 (GAFMIPFLILLVLEGIPLLYL) traverse the membrane as a helical segment. Residues 89–120 (EFAIGQRLRRGSLGVWSSIHPALKGLGLASML) are Cytoplasmic-facing. Residues 121-141 (TSFMVGLYYNTIISWIMWYLF) form a helical membrane-spanning segment. Topologically, residues 142-192 (NSFQEPLPWSDCPLNENQTGYVDECARSSPVDYFWYRETLNISTSISDSGS) are extracellular. N-linked (GlcNAc...) asparagine glycans are attached at residues asparagine 158 and asparagine 182. The helical transmembrane segment at 193-213 (IQWWMLLCLACAWSVLYMCTI) threads the bilayer. Residues 214–221 (RGIETTGK) lie on the Cytoplasmic side of the membrane. The helical transmembrane segment at 222–242 (AVYITSTLPYVVLTIFLIRGL) threads the bilayer. At 243–268 (TLKGATNGIVFLFTPNVTELAQPDTW) the chain is on the extracellular side. Asparagine 258 is a glycosylation site (N-linked (GlcNAc...) asparagine). Residues 269–289 (LDAGAQVFFSFSLAFGGLISF) form a helical membrane-spanning segment. The Cytoplasmic segment spans residues 290 to 304 (SSYNSVHNNCEKDSV). The chain crosses the membrane as a helical span at residues 305 to 325 (IVSIINGFTSVYVAIVVYSVI). Residues 326 to 413 (GFRATQRYDD…TEAITKMPLS (88 aa)) lie on the Extracellular side of the membrane. Residues asparagine 354 and asparagine 368 are each glycosylated (N-linked (GlcNAc...) asparagine). Residues 414 to 434 (PLWSVLFFIMLFCLGLSSMFG) traverse the membrane as a helical segment. The Cytoplasmic portion of the chain corresponds to 435 to 456 (NMEGVVVPLQDLRVIPPKWPKE). Residues 457–477 (VLTGLICLGTFLIGFIFTLNS) traverse the membrane as a helical segment. Residues 478-490 (GQYWLSLLDSYAG) lie on the Extracellular side of the membrane. A helical membrane pass occupies residues 491 to 511 (SIPLLIIAFCEMFSVVYVYGV). Residues 512 to 531 (DRFNKDIEFMIGHKPNIFWQ) lie on the Cytoplasmic side of the membrane. Residues 532–552 (VTWRVVSPLLMLIIFLFFFVV) form a helical membrane-spanning segment. Topologically, residues 553-581 (EVSQELTYSIWDPGYEEFPKSQKISYPNW) are extracellular. The helical transmembrane segment at 582 to 602 (VYVVVVIVAGVPSLTIPGYAI) threads the bilayer. Over 603–634 (YKLIRNHCQKPGDHQGLVSTLSTASMNGDLKY) the chain is Cytoplasmic. Serine 627 bears the Phosphoserine mark.

The protein belongs to the sodium:neurotransmitter symporter (SNF) (TC 2.A.22) family. SLC6A19 subfamily. As to quaternary structure, interacts in a tissue-specific manner with ACE2 in small intestine and with CLTRN in the kidney. Interacts with CLTRN; this interaction is required for trafficking of SLC6A19 to the plasma membrane and for its catalytic activation in kidneys. Interacts with ACE2; this interaction is required for trafficking of SLC6A19 to the plasma membrane and for its catalytic activation in intestine. Interacts with ANPEP; the interaction positively regulates its amino acid transporter activity. As to expression, robust expression in kidney and small intestine, with minimal expression in pancreas. Also expressed in stomach, liver, duodenum, ileocecum, colon and prostate. Not detected in testis, whole brain, cerebellum, fetal liver, spleen, skeletal muscle, uterus, heart or lung.

The protein localises to the cell membrane. The protein resides in the apical cell membrane. The catalysed reaction is L-alanine(in) + Na(+)(in) = L-alanine(out) + Na(+)(out). It catalyses the reaction L-cysteine(in) + Na(+)(in) = L-cysteine(out) + Na(+)(out). The enzyme catalyses L-glutamine(in) + Na(+)(in) = L-glutamine(out) + Na(+)(out). It carries out the reaction glycine(in) + Na(+)(in) = glycine(out) + Na(+)(out). The catalysed reaction is L-isoleucine(in) + Na(+)(in) = L-isoleucine(out) + Na(+)(out). It catalyses the reaction L-leucine(in) + Na(+)(in) = L-leucine(out) + Na(+)(out). The enzyme catalyses L-methionine(in) + Na(+)(in) = L-methionine(out) + Na(+)(out). It carries out the reaction L-phenylalanine(in) + Na(+)(in) = L-phenylalanine(out) + Na(+)(out). The catalysed reaction is L-serine(in) + Na(+)(in) = L-serine(out) + Na(+)(out). It catalyses the reaction L-tryptophan(in) + Na(+)(in) = L-tryptophan(out) + Na(+)(out). The enzyme catalyses L-tyrosine(in) + Na(+)(in) = L-tyrosine(out) + Na(+)(out). It carries out the reaction L-valine(in) + Na(+)(in) = L-valine(out) + Na(+)(out). Transporter that mediates resorption of neutral amino acids across the apical membrane of renal and intestinal epithelial cells. This uptake is sodium-dependent and chloride-independent. Requires CLTRN in kidney or ACE2 in intestine for cell surface expression and amino acid transporter activity. In Homo sapiens (Human), this protein is Sodium-dependent neutral amino acid transporter B(0)AT1 (SLC6A19).